Reading from the N-terminus, the 547-residue chain is Chaperonin GroEL (547 aa).

Residues 30 to 33, Lys-51, 87 to 91, Gly-415, and Asp-495 contribute to the ATP site; these read TLGP and DGTTT.

The protein belongs to the chaperonin (HSP60) family. Forms a cylinder of 14 subunits composed of two heptameric rings stacked back-to-back. Interacts with the co-chaperonin GroES.

The protein localises to the cytoplasm. The enzyme catalyses ATP + H2O + a folded polypeptide = ADP + phosphate + an unfolded polypeptide.. Together with its co-chaperonin GroES, plays an essential role in assisting protein folding. The GroEL-GroES system forms a nano-cage that allows encapsulation of the non-native substrate proteins and provides a physical environment optimized to promote and accelerate protein folding. The chain is Chaperonin GroEL from Shewanella halifaxensis (strain HAW-EB4).